The primary structure comprises 65 residues: Large ribosomal subunit protein bL35 (65 aa).

The protein belongs to the bacterial ribosomal protein bL35 family.

This is Large ribosomal subunit protein bL35 from Chlorobium phaeovibrioides (strain DSM 265 / 1930) (Prosthecochloris vibrioformis (strain DSM 265)).